The following is a 136-amino-acid chain: Large ribosomal subunit protein uL16 (136 aa).

This sequence belongs to the universal ribosomal protein uL16 family. Part of the 50S ribosomal subunit.

Functionally, binds 23S rRNA and is also seen to make contacts with the A and possibly P site tRNAs. In Elusimicrobium minutum (strain Pei191), this protein is Large ribosomal subunit protein uL16.